Here is a 369-residue protein sequence, read N- to C-terminus: Putative agmatine deiminase (369 aa).

The active-site Amidino-cysteine intermediate is the C361.

It belongs to the agmatine deiminase family.

The enzyme catalyses agmatine + H2O = N-carbamoylputrescine + NH4(+). In Streptococcus mutans serotype c (strain ATCC 700610 / UA159), this protein is Putative agmatine deiminase.